The sequence spans 321 residues: MQILLANPRGFCAGVDRAISIVENALAIYGAPIYVRHEVVHNRYVVDSLRERGAIFIEQISEVPDGAILIFSAHGVSQAVRNEAKSRDLTVFDATCPLVTKVHMEVARASRRGEESILIGHAGHPEVEGTMGQYSNPEGGMYLVESPDDVWKLTVKNEEKLSFMTQTTLSVDDTSDVIDALRKRFPKIVGPRKDDICYATTNRQEAVRALAEQAEVVLVVGSKNSSNSNRLAELAQRMGKRAFLIDDATDIQEEWVKEAKCVGVTAGASAPDILVQNVVARLRSLAVAKPFRWKAAKKISFSKCRKSCESIFVKSIKSLAA.

C12 is a [4Fe-4S] cluster binding site. (2E)-4-hydroxy-3-methylbut-2-enyl diphosphate contacts are provided by H41 and H74. Dimethylallyl diphosphate contacts are provided by H41 and H74. The isopentenyl diphosphate site is built by H41 and H74. Residue C96 participates in [4Fe-4S] cluster binding. A (2E)-4-hydroxy-3-methylbut-2-enyl diphosphate-binding site is contributed by H124. H124 contributes to the dimethylallyl diphosphate binding site. Residue H124 coordinates isopentenyl diphosphate. Residue E126 is the Proton donor of the active site. Residue T167 coordinates (2E)-4-hydroxy-3-methylbut-2-enyl diphosphate. Residue C197 participates in [4Fe-4S] cluster binding. Residues S225, S226, N227, and S269 each contribute to the (2E)-4-hydroxy-3-methylbut-2-enyl diphosphate site. Dimethylallyl diphosphate-binding residues include S225, S226, N227, and S269. Residues S225, S226, N227, and S269 each contribute to the isopentenyl diphosphate site.

This sequence belongs to the IspH family. In terms of assembly, homodimer. The cofactor is [4Fe-4S] cluster.

The enzyme catalyses isopentenyl diphosphate + 2 oxidized [2Fe-2S]-[ferredoxin] + H2O = (2E)-4-hydroxy-3-methylbut-2-enyl diphosphate + 2 reduced [2Fe-2S]-[ferredoxin] + 2 H(+). The catalysed reaction is dimethylallyl diphosphate + 2 oxidized [2Fe-2S]-[ferredoxin] + H2O = (2E)-4-hydroxy-3-methylbut-2-enyl diphosphate + 2 reduced [2Fe-2S]-[ferredoxin] + 2 H(+). Its pathway is isoprenoid biosynthesis; dimethylallyl diphosphate biosynthesis; dimethylallyl diphosphate from (2E)-4-hydroxy-3-methylbutenyl diphosphate: step 1/1. It participates in isoprenoid biosynthesis; isopentenyl diphosphate biosynthesis via DXP pathway; isopentenyl diphosphate from 1-deoxy-D-xylulose 5-phosphate: step 6/6. Catalyzes the conversion of 1-hydroxy-2-methyl-2-(E)-butenyl 4-diphosphate (HMBPP) into a mixture of isopentenyl diphosphate (IPP) and dimethylallyl diphosphate (DMAPP). Acts in the terminal step of the DOXP/MEP pathway for isoprenoid precursor biosynthesis. This is 4-hydroxy-3-methylbut-2-enyl diphosphate reductase from Escherichia coli O6:K15:H31 (strain 536 / UPEC).